The primary structure comprises 337 residues: Heat-inducible transcription repressor HrcA (337 aa).

It belongs to the HrcA family.

Its function is as follows. Negative regulator of class I heat shock genes (grpE-dnaK-dnaJ and groELS operons). Prevents heat-shock induction of these operons. This chain is Heat-inducible transcription repressor HrcA, found in Pseudarthrobacter chlorophenolicus (strain ATCC 700700 / DSM 12829 / CIP 107037 / JCM 12360 / KCTC 9906 / NCIMB 13794 / A6) (Arthrobacter chlorophenolicus).